The primary structure comprises 464 residues: UDP-N-acetylmuramate--L-alanine ligase (464 aa).

112 to 118 provides a ligand contact to ATP; that stretch reads GTHGKTT.

The protein belongs to the MurCDEF family.

Its subcellular location is the cytoplasm. It catalyses the reaction UDP-N-acetyl-alpha-D-muramate + L-alanine + ATP = UDP-N-acetyl-alpha-D-muramoyl-L-alanine + ADP + phosphate + H(+). Its pathway is cell wall biogenesis; peptidoglycan biosynthesis. Cell wall formation. The polypeptide is UDP-N-acetylmuramate--L-alanine ligase (Chromobacterium violaceum (strain ATCC 12472 / DSM 30191 / JCM 1249 / CCUG 213 / NBRC 12614 / NCIMB 9131 / NCTC 9757 / MK)).